The following is a 151-amino-acid chain: Probable cGMP 3',5'-cyclic phosphodiesterase subunit delta (151 aa).

It belongs to the PDE6D/unc-119 family. As to quaternary structure, interacts with Pde6.

It localises to the nucleus. It is found in the cytoplasm. In Drosophila grimshawi (Hawaiian fruit fly), this protein is Probable cGMP 3',5'-cyclic phosphodiesterase subunit delta.